The chain runs to 598 residues: Elongation factor 4 (598 aa).

Residues 2 to 184 form the tr-type G domain; sequence KNIRNFSIIA…EIVAKIPAPE (183 aa). Residues 14–19 and 131–134 contribute to the GTP site; these read DHGKST and NKID.

This sequence belongs to the TRAFAC class translation factor GTPase superfamily. Classic translation factor GTPase family. LepA subfamily.

It is found in the cell inner membrane. The catalysed reaction is GTP + H2O = GDP + phosphate + H(+). In terms of biological role, required for accurate and efficient protein synthesis under certain stress conditions. May act as a fidelity factor of the translation reaction, by catalyzing a one-codon backward translocation of tRNAs on improperly translocated ribosomes. Back-translocation proceeds from a post-translocation (POST) complex to a pre-translocation (PRE) complex, thus giving elongation factor G a second chance to translocate the tRNAs correctly. Binds to ribosomes in a GTP-dependent manner. The protein is Elongation factor 4 of Haemophilus influenzae (strain ATCC 51907 / DSM 11121 / KW20 / Rd).